A 576-amino-acid polypeptide reads, in one-letter code: MSSTVIILIVVLLVILVAFYAFAILMRKKTEDRILALEERKESLFDLPVQEEIDSVKKMHLVGQSQTIFREWNQKWLDLSSNSFADLEEHIFEAEQLNDSFHFFRARESVADSEAQIELMEGDVEGIRQGVAQLVEQEKRNSNKIQESLDLYDNLRSDIADNADLYGTVITELEKHLANIETEFSQFVTLNSTGDPIEAAEVLETAEEHTIALRAITEQIPSFIKTIEKDVPKRLEELQEASDKFVAEEYILPDNVNIKERMDDLHDHLVESSSLLEQFELDRVEAELGLIQEKVEELYAIFEREYSARRNVEKRSSVLKEYIEHIRANNKNLLLEIDHVTQAYILSGNEKGYVRGYQEHLESLDSDVDEILGNIQAKTMPYSILSRRVNSVVNALEDIEKNQIKISDTLTGLRDEERAAQEIAERFDSELRTIKRYVEKCNLPGLPKDYLDLFFTTGDRVQNLFKELGRVRINIDTINHLVDVSTEDMHVLKEATTNLTDHAVLAEQLIQYANRYKAANEQVAQGISRALQLFENSRDYDGSFDEISKTLELVEPGAASRISGVYFKNKPTPDYL.

Residues Met1–Ile7 are Extracellular-facing. The helical transmembrane segment at Leu8–Met26 threads the bilayer. The Cytoplasmic segment spans residues Arg27–Leu576. 2 coiled-coil regions span residues Arg105–Leu134 and Glu277–Ile301.

The protein belongs to the EzrA family.

It is found in the cell membrane. Negative regulator of FtsZ ring formation; modulates the frequency and position of FtsZ ring formation. Inhibits FtsZ ring formation at polar sites. Interacts either with FtsZ or with one of its binding partners to promote depolymerization. This Lactococcus lactis subsp. lactis (strain IL1403) (Streptococcus lactis) protein is Septation ring formation regulator EzrA.